The sequence spans 569 residues: Santalene synthase (569 aa).

Positions 284, 321, 325, and 460 each coordinate (2E)-geranyl diphosphate. The Mg(2+) site is built by Asp321 and Asp325. The DDXXD motif motif lies at 321–325 (DDGYD). Residues Asn463, Thr467, and Glu471 each coordinate Mg(2+).

This sequence belongs to the terpene synthase family. Tpsb subfamily. Mg(2+) is required as a cofactor. Mn(2+) serves as cofactor.

It carries out the reaction (2E,6E)-farnesyl diphosphate = (1S,5S,6R)-alpha-bergamotene + diphosphate. The catalysed reaction is (2E,6E)-farnesyl diphosphate = (+)-alpha-santalene + diphosphate. It catalyses the reaction (2E,6E)-farnesyl diphosphate = (-)-beta-santalene + diphosphate. In terms of biological role, catalyzes a mixture of sesquiterpenoids from (2E,6E)-farnesyl diphosphate in fragrance biosynthesis. Catalyzes the formation of alpha-santalene, beta-santalene, epi-beta-santalene and exo-alpha-bergamotene, as well as traces of alpha-farnesene and beta-farnesene. Also acts with (Z,Z)-farnesyl diphosphate isomer, producing alpha-endo-bergamotene, alpha-santalene, (Z)-beta-farnesene, epi-beta-santalene, and beta-santalene. The chain is Santalene synthase from Santalum album (White sandalwood).